We begin with the raw amino-acid sequence, 103 residues long: MYAVIKTGGKQYRVENGLKLKIEQVPVEIGSELLIDQVLMVADGDNISLGKPLVSGASVKATVLEQGRHDKVRIFKMRRRKHYRKQQGHRQNYTEIQITGISV.

Belongs to the bacterial ribosomal protein bL21 family. As to quaternary structure, part of the 50S ribosomal subunit. Contacts protein L20.

Its function is as follows. This protein binds to 23S rRNA in the presence of protein L20. This is Large ribosomal subunit protein bL21 from Nitrosospira multiformis (strain ATCC 25196 / NCIMB 11849 / C 71).